The chain runs to 412 residues: Serine hydroxymethyltransferase (412 aa).

(6S)-5,6,7,8-tetrahydrofolate contacts are provided by residues Leu125 and 129 to 131; that span reads GHL. Lys234 carries the post-translational modification N6-(pyridoxal phosphate)lysine. Glu250 is a binding site for (6S)-5,6,7,8-tetrahydrofolate.

The protein belongs to the SHMT family. Homodimer. It depends on pyridoxal 5'-phosphate as a cofactor.

It localises to the cytoplasm. The catalysed reaction is (6R)-5,10-methylene-5,6,7,8-tetrahydrofolate + glycine + H2O = (6S)-5,6,7,8-tetrahydrofolate + L-serine. It participates in one-carbon metabolism; tetrahydrofolate interconversion. It functions in the pathway amino-acid biosynthesis; glycine biosynthesis; glycine from L-serine: step 1/1. Catalyzes the reversible interconversion of serine and glycine with tetrahydrofolate (THF) serving as the one-carbon carrier. This reaction serves as the major source of one-carbon groups required for the biosynthesis of purines, thymidylate, methionine, and other important biomolecules. Also exhibits THF-independent aldolase activity toward beta-hydroxyamino acids, producing glycine and aldehydes, via a retro-aldol mechanism. The sequence is that of Serine hydroxymethyltransferase from Deinococcus geothermalis (strain DSM 11300 / CIP 105573 / AG-3a).